Consider the following 319-residue polypeptide: Ribonuclease Z (319 aa).

Positions 62, 64, 66, 67, 139, 209, and 268 each coordinate Zn(2+). The active-site Proton acceptor is the aspartate 66.

It belongs to the RNase Z family. Homodimer. Zn(2+) is required as a cofactor.

It catalyses the reaction Endonucleolytic cleavage of RNA, removing extra 3' nucleotides from tRNA precursor, generating 3' termini of tRNAs. A 3'-hydroxy group is left at the tRNA terminus and a 5'-phosphoryl group is left at the trailer molecule.. Functionally, zinc phosphodiesterase, which displays some tRNA 3'-processing endonuclease activity. Probably involved in tRNA maturation, by removing a 3'-trailer from precursor tRNA. The sequence is that of Ribonuclease Z from Pseudomonas putida (strain ATCC 700007 / DSM 6899 / JCM 31910 / BCRC 17059 / LMG 24140 / F1).